The sequence spans 400 residues: MKNLDDLLSEGVRGRRVLVRADLNVPLDGDRITDDGRVRASLPTIEKLTGAGARVVVTAHLGRPKGEPDPKFSLAPVAARLGELLGADVALAGDVVGESAKSAVAAQADGSVVLLENVRFDARETSKDDAERGALADELAALVGDGAAFVSDGFGVVHRKQASVYDIAKRVPGYAGGLVLSEVEVLRTLTGDPRRPYAVVLGGSKVSDKLGVIQALLPKVDKLLIGGGMAYTFLAAQGHSVGKSLLQQDQVESTCKLLEEHGDKLVLPVDVVVADRFAADAESRVVDADAIPADWMGLDIGPRSVELFAGILAGSRTVFWNGPAGVFEFPAFAEGTRGIAQAIVDSGSFSVVGGGDSAAAVRSLGLPEDGFSHISTGGGASLEYLEGKELPGVSVLEEGR.

Substrate contacts are provided by residues 22–24 (DLN), Arg37, 60–63 (HLGR), Arg119, and Arg159. ATP-binding positions include Lys209, Gly297, Glu328, and 354-357 (GGDS).

It belongs to the phosphoglycerate kinase family. As to quaternary structure, monomer.

It is found in the cytoplasm. It carries out the reaction (2R)-3-phosphoglycerate + ATP = (2R)-3-phospho-glyceroyl phosphate + ADP. Its pathway is carbohydrate degradation; glycolysis; pyruvate from D-glyceraldehyde 3-phosphate: step 2/5. This is Phosphoglycerate kinase from Saccharopolyspora erythraea (strain ATCC 11635 / DSM 40517 / JCM 4748 / NBRC 13426 / NCIMB 8594 / NRRL 2338).